The following is a 99-amino-acid chain: Acylphosphatase (99 aa).

The Acylphosphatase-like domain occupies isoleucine 5–serine 97. Catalysis depends on residues arginine 20 and asparagine 38.

It belongs to the acylphosphatase family.

It carries out the reaction an acyl phosphate + H2O = a carboxylate + phosphate + H(+). The polypeptide is Acylphosphatase (acyP) (Rhodopseudomonas palustris (strain ATCC BAA-98 / CGA009)).